The chain runs to 495 residues: Lysine--tRNA ligase (495 aa).

Mg(2+) contacts are provided by glutamate 406 and glutamate 413.

This sequence belongs to the class-II aminoacyl-tRNA synthetase family. As to quaternary structure, homodimer. The cofactor is Mg(2+).

The protein resides in the cytoplasm. It carries out the reaction tRNA(Lys) + L-lysine + ATP = L-lysyl-tRNA(Lys) + AMP + diphosphate. In Staphylococcus aureus (strain MRSA252), this protein is Lysine--tRNA ligase.